A 323-amino-acid polypeptide reads, in one-letter code: Forkhead transcription factor fkh-6 (323 aa).

Residues 21–122 constitute a DNA-binding region (fork-head); that stretch reads KPPYSYVALI…DNGNFKRRRV (102 aa).

It localises to the nucleus. Probable transcription factor. Binds to the DNA sequence motif 5'-[TA]TGTT[TG]T[TG][ATG]TT-3'. Regulates sexual dimorphism in the gonad, promoting male gonadal cell fates in chromosomally (XO) male animals, yet plays a role in gonadogenesis in both sexes; probably acts downstream of terminal regulator of sex determination tra-1, to control early gonadogenesis. Positively modulates expression of homeobox protein egl-5, probably acting indirectly, during early gonadal development. This Caenorhabditis elegans protein is Forkhead transcription factor fkh-6.